The primary structure comprises 304 residues: Ribosome-inactivating protein 9 (304 aa).

Glutamate 208 is a catalytic residue.

Belongs to the ribosome-inactivating protein family. Type 1 RIP subfamily. As to quaternary structure, monomer. In terms of tissue distribution, accumulates to high levels in seeds.

Its subcellular location is the cytoplasm. The catalysed reaction is Endohydrolysis of the N-glycosidic bond at one specific adenosine on the 28S rRNA.. Possesses features of some constitutive defense agent. The coordinate Opaque-2-controlled synthesis of this protein and the major seed storage proteins (zeins) may provide the germinating seedling with both nutritional benefits and protection against pathogen invasion of the surrounding endosperm. This is Ribosome-inactivating protein 9 (CRIP9) from Zea mays (Maize).